The sequence spans 110 residues: uncharacterized protein (110 aa).

This is an uncharacterized protein from Archaeoglobus fulgidus (strain ATCC 49558 / DSM 4304 / JCM 9628 / NBRC 100126 / VC-16).